The sequence spans 556 residues: F-box protein YDR131C (556 aa).

Positions 1-44 constitute an F-box domain; sequence MFDKLPYEIFKQIAWRIPQEDKISLTYVCKRSYESIIPFIYQNL.

As to quaternary structure, interacts with SKP1. Component of the probable SCF(YDR131C) complex containing CDC53, SKP1, RBX1 and YDR131C.

It localises to the vacuole. The protein operates within protein modification; protein ubiquitination. Its function is as follows. Substrate recognition component of a SCF (SKP1-CUL1-F-box protein) E3 ubiquitin-protein ligase complex which mediates the ubiquitination and subsequent proteasomal degradation of target proteins. Probably recognizes and binds to phosphorylated target proteins. This Saccharomyces cerevisiae (strain ATCC 204508 / S288c) (Baker's yeast) protein is F-box protein YDR131C.